The sequence spans 956 residues: uncharacterized protein (956 aa).

The Fibronectin type-III domain maps to 40–141; sequence PATKVSIDKI…IYCMTKAREA (102 aa). Disordered stretches follow at residues 152–173 and 488–600; these read RNTITSSTAMQPRNSKSEPAPL and NNGD…SYSH. Composition is skewed to polar residues over residues 153-165 and 488-523; these read NTITSSTAMQPRN and NNGDSLAATNSNNSAEKNRSSGSIQLPLSNNMSRTG. Phosphothreonine is present on Thr-154. Residues Ser-501 and Ser-520 each carry the phosphoserine modification. The span at 524–543 shows a compositional bias: low complexity; the sequence is SIDLISNNNKSINNSNADSA. Polar residues predominate over residues 552–563; the sequence is VSYSPSNEPIQP. Residues 564–574 are compositionally biased toward low complexity; it reads SSSLLSQLTQD. Polar residues predominate over residues 578–599; that stretch reads RSMLSNHISSNNENKQQPSSYS. Residues Ser-802, Ser-842, and Ser-895 each carry the phosphoserine modification. The tract at residues 875–956 is disordered; sequence VGPKVPAKEP…NLFNPHSHDS (82 aa). Over residues 895–904 the composition is skewed to low complexity; that stretch reads SNSSISSAWS.

This is an uncharacterized protein from Saccharomyces cerevisiae (strain ATCC 204508 / S288c) (Baker's yeast).